The following is a 102-amino-acid chain: Secreted RxLR effector protein 61 (102 aa).

An N-terminal signal peptide occupies residues 1-22 (MAFQLRIVQHLLHITFLRLPLA). The RxLR-dEER signature appears at 51–60 (RRLRQLNEHR).

The protein belongs to the RxLR effector family.

The protein resides in the secreted. It is found in the host chloroplast envelope. Its subcellular location is the host cytoplasm. It localises to the host nucleus. Its function is as follows. Effector that partially suppresses the tobacco programmed cell death induced by cell death-inducing proteins. The protein is Secreted RxLR effector protein 61 of Plasmopara viticola (Downy mildew of grapevine).